The sequence spans 218 residues: MRGTTSNGAAPSGAGVAVVIAVKRLADAKTRLAPIFAPHDRETVVLAMLVDTVAAAAAVAAVTVVTPDPAAAEAARALGAQVLDDPTPAGHPDPLNNALRAAEAAVRATVPNVVALQGDLPALQAQELSEAIAAARTRPRSFVGDRHGTGTSALFAFGVPLDPRFGPDSAERHRRSGAVELTGSWPGLRYDIDTPDDLLAARRLGVGTQTARAVGAER.

Residues T151, G166, and S169 each coordinate phosphoenolpyruvate.

The protein belongs to the CofC family.

The enzyme catalyses phosphoenolpyruvate + GTP + H(+) = enolpyruvoyl-2-diphospho-5'-guanosine + diphosphate. It functions in the pathway cofactor biosynthesis; coenzyme F420 biosynthesis. In terms of biological role, guanylyltransferase that catalyzes the activation of phosphoenolpyruvate (PEP) as enolpyruvoyl-2-diphospho-5'-guanosine, via the condensation of PEP with GTP. It is involved in the biosynthesis of coenzyme F420, a hydride carrier cofactor. This chain is Phosphoenolpyruvate guanylyltransferase, found in Mycobacterium sp. (strain KMS).